A 346-amino-acid polypeptide reads, in one-letter code: Hydroxymethylglutaryl-CoA synthase (346 aa).

Asp-28 serves as a coordination point for (3S)-3-hydroxy-3-methylglutaryl-CoA. Glu-80 (proton donor/acceptor) is an active-site residue. (3S)-3-hydroxy-3-methylglutaryl-CoA contacts are provided by Cys-112 and Thr-153. Cys-112 serves as the catalytic Acyl-thioester intermediate. Arg-199 is a binding site for CoA. The (3S)-3-hydroxy-3-methylglutaryl-CoA site is built by Thr-201 and His-234. His-234 (proton donor/acceptor) is an active-site residue. Position 239 (Lys-239) interacts with CoA. Residues Arg-243, Asn-266, and Ser-296 each contribute to the (3S)-3-hydroxy-3-methylglutaryl-CoA site.

It belongs to the thiolase-like superfamily. Archaeal HMG-CoA synthase family. In terms of assembly, interacts with acetoacetyl-CoA thiolase that catalyzes the precedent step in the pathway and with a DUF35 protein. The acetoacetyl-CoA thiolase/HMG-CoA synthase complex channels the intermediate via a fused CoA-binding site, which allows for efficient coupling of the endergonic thiolase reaction with the exergonic HMGCS reaction.

It carries out the reaction acetoacetyl-CoA + acetyl-CoA + H2O = (3S)-3-hydroxy-3-methylglutaryl-CoA + CoA + H(+). The protein operates within metabolic intermediate biosynthesis; (R)-mevalonate biosynthesis; (R)-mevalonate from acetyl-CoA: step 2/3. Its function is as follows. Catalyzes the condensation of acetyl-CoA with acetoacetyl-CoA to form 3-hydroxy-3-methylglutaryl-CoA (HMG-CoA). Functions in the mevalonate (MVA) pathway leading to isopentenyl diphosphate (IPP), a key precursor for the biosynthesis of isoprenoid compounds that are building blocks of archaeal membrane lipids. The polypeptide is Hydroxymethylglutaryl-CoA synthase (Methanosphaera stadtmanae (strain ATCC 43021 / DSM 3091 / JCM 11832 / MCB-3)).